The chain runs to 904 residues: MDRYLLLVIWGEGKFPSAASREAEHGPEVSSGEGTENQPDFTAANVYHLLKRSISASINPEDSTFPACSVGGIPGSKKWFFAVQAIYGFYQFCSSDWQEIHFDTEKDKIEDVLQTNIEECLGAVECFEEEDSNSRESLSLADLYEEAAENLHQLSDKLPAPGRAMVDIILLLSDKDPPKLKDYLPTVGALKHLREWYSAKITIAGNHCEINCQKIAEYLSANVVSLEDLRNVIDSKELWRGKIQIWERKFGFEISFPEFCLKGVTLKNFSTSNLNTDFLAKKIIPSKDKNILPKVFHYYGPALEFVQMIKLSDLPSCYMSDIEFELGLTNSTKQNSVLLLEQISSLCSKVGALFVLPCTISNILIPPPNQLSSRKWKEYIAKKPKTISVPDVEVKGECSSYYLLLQGNGNRRCKATLIHSANQINGSFALNLIHGKMKTKTEEAKLSFPFDLLSLPHFSGEQIVQREKQLANVQVLALEECLKRRKLAKQPETVSVAELKSLLVLTRKHFLDYFDAVIPKMILRKMDKIKTFNILNDFSPVEPNSSSLMETNPLEWPERHVLQNLETFEKTKQKMRTGSLPHSSEQLLGHKEGPRDSITLLDAKELLKYFTSDGLPIGDLQPLPIQKGEKTFVLTPELSPGKLQVLPFEKASVCHYHGIEYCLDDRKALERDGGFSELQSRLIRYETQTTCTRESFPVPTVLSPLPSPVVSSDPGSVPDGEVLQNELRTEVSRLKRRSKDLNCLYPRKRLVKSESSESLLSQTTGNSNHYHHHVTSRKPQTERSLPVTCPLVPIPSCETPKLATKTSSGQKSMHESKTSRQIKESRSQKHTRILKEVVTETLKKHSITETHECFTACSQRLFEISKFYLKDLKTSRGLFEEMKKTANNNAVQVIDWVLEKTSKK.

The interval 19–38 (ASREAEHGPEVSSGEGTENQ) is disordered. The interaction with MDM2 stretch occupies residues 521 to 904 (MILRKMDKIK…DWVLEKTSKK (384 aa)). Phosphoserine occurs at positions 597, 639, 703, and 707. 2 disordered regions span residues 754–784 (ESSE…TERS) and 800–830 (PKLA…SQKH). Over residues 812–830 (SMHESKTSRQIKESRSQKH) the composition is skewed to basic and acidic residues.

This sequence belongs to the MTBP family. In terms of assembly, interacts with MDM2.

Functionally, inhibits cell migration in vitro and suppresses the invasive behavior of tumor cells. May play a role in MDM2-dependent p53/TP53 homeostasis in unstressed cells. Inhibits autoubiquitination of MDM2, thereby enhancing MDM2 stability. This promotes MDM2-mediated ubiquitination of p53/TP53 and its subsequent degradation. This chain is Mdm2-binding protein (MTBP), found in Homo sapiens (Human).